A 164-amino-acid polypeptide reads, in one-letter code: ATP synthase subunit b 1 (164 aa).

Residues Met-4–Tyr-24 form a helical membrane-spanning segment.

Belongs to the ATPase B chain family. In terms of assembly, F-type ATPases have 2 components, F(1) - the catalytic core - and F(0) - the membrane proton channel. F(1) has five subunits: alpha(3), beta(3), gamma(1), delta(1), epsilon(1). F(0) has three main subunits: a(1), b(2) and c(10-14). The alpha and beta chains form an alternating ring which encloses part of the gamma chain. F(1) is attached to F(0) by a central stalk formed by the gamma and epsilon chains, while a peripheral stalk is formed by the delta and b chains.

The protein resides in the cell inner membrane. Functionally, f(1)F(0) ATP synthase produces ATP from ADP in the presence of a proton or sodium gradient. F-type ATPases consist of two structural domains, F(1) containing the extramembraneous catalytic core and F(0) containing the membrane proton channel, linked together by a central stalk and a peripheral stalk. During catalysis, ATP synthesis in the catalytic domain of F(1) is coupled via a rotary mechanism of the central stalk subunits to proton translocation. In terms of biological role, component of the F(0) channel, it forms part of the peripheral stalk, linking F(1) to F(0). The protein is ATP synthase subunit b 1 of Azorhizobium caulinodans (strain ATCC 43989 / DSM 5975 / JCM 20966 / LMG 6465 / NBRC 14845 / NCIMB 13405 / ORS 571).